We begin with the raw amino-acid sequence, 273 residues long: 4-hydroxy-tetrahydrodipicolinate reductase (273 aa).

NAD(+) contacts are provided by residues 12 to 17 and glutamate 38; that span reads GAGGRM. Arginine 39 lines the NADP(+) pocket. Residues 102-104 and 126-129 each bind NAD(+); these read GTT and AANF. Histidine 159 functions as the Proton donor/acceptor in the catalytic mechanism. A (S)-2,3,4,5-tetrahydrodipicolinate-binding site is contributed by histidine 160. Residue lysine 163 is the Proton donor of the active site. A (S)-2,3,4,5-tetrahydrodipicolinate-binding site is contributed by 169-170; the sequence is GT.

This sequence belongs to the DapB family. Homotetramer.

The protein resides in the cytoplasm. The enzyme catalyses (S)-2,3,4,5-tetrahydrodipicolinate + NAD(+) + H2O = (2S,4S)-4-hydroxy-2,3,4,5-tetrahydrodipicolinate + NADH + H(+). It catalyses the reaction (S)-2,3,4,5-tetrahydrodipicolinate + NADP(+) + H2O = (2S,4S)-4-hydroxy-2,3,4,5-tetrahydrodipicolinate + NADPH + H(+). Its pathway is amino-acid biosynthesis; L-lysine biosynthesis via DAP pathway; (S)-tetrahydrodipicolinate from L-aspartate: step 4/4. In terms of biological role, catalyzes the conversion of 4-hydroxy-tetrahydrodipicolinate (HTPA) to tetrahydrodipicolinate. The sequence is that of 4-hydroxy-tetrahydrodipicolinate reductase from Escherichia coli O139:H28 (strain E24377A / ETEC).